The primary structure comprises 172 residues: Myosin regulatory light polypeptide 9 (172 aa).

Positions 1-16 are enriched in basic residues; the sequence is MSSKRAKAKTTKKRPQ. The disordered stretch occupies residues 1-20; sequence MSSKRAKAKTTKKRPQRATS. Position 2 is an N-acetylserine (S2). T19 carries the phosphothreonine; by MLCK, CIT and ROCK2 modification. S20 bears the Phosphoserine; by CDC42BP, CIT, MLCK, PAK1, ROCK1, ROCK2, DAPK1, DAPK2 and ZIPK/DAPK3 mark. EF-hand domains are found at residues 29 to 64, 98 to 133, and 134 to 169; these read SQIQ…LGKN, DPED…MGDR, and FTDE…GAKD. Ca(2+) contacts are provided by D42, N44, D46, and D53.

In terms of assembly, myosin is a hexamer of 2 heavy chains and 4 light chains: interacts with myosin heavy chain MYO19. Interacts with LUZP1; the interaction results in inhibition of phosphorylation of MYL9 by DAPK3. Phosphorylation increases the actin-activated myosin ATPase activity and thereby regulates the contractile activity. It is required to generate the driving force in the migration of the cells but not necessary for localization of myosin-2 at the leading edge. Phosphorylation is required for myotube formation. Phosphorylated by DAPK3; DAPK3-mediated phosphorylation is inhibited by LUZP1. Smooth muscle tissues and in some, but not all, nonmuscle cells.

It is found in the cytoplasm. It localises to the cytoskeleton. Its subcellular location is the cell cortex. In terms of biological role, myosin regulatory subunit that plays an important role in regulation of both smooth muscle and nonmuscle cell contractile activity via its phosphorylation. Implicated in cytokinesis, receptor capping, and cell locomotion. In myoblasts, may regulate PIEZO1-dependent cortical actomyosin assembly involved in myotube formation. The sequence is that of Myosin regulatory light polypeptide 9 (MYL9) from Homo sapiens (Human).